The sequence spans 357 residues: Hypersensitivity response secretion protein HrcU (357 aa).

The tract at residues 1-21 (MSDEKTEQPTDKKLEDAHRDG) is disordered. A run of 5 helical transmembrane segments spans residues 29 to 49 (LTAA…ASVF), 84 to 104 (LVLM…IATW), 149 to 169 (VAVA…IVGA), 180 to 200 (IGMT…LILG), and 323 to 343 (LYGP…AWVG).

Belongs to the type III secretion exporter family.

Its subcellular location is the cell membrane. Involved in the secretion of PopA, a proteinaceous elicitor of the hypersensitivity response in plants. The protein is Hypersensitivity response secretion protein HrcU (hrcU) of Ralstonia nicotianae (strain ATCC BAA-1114 / GMI1000) (Ralstonia solanacearum).